Consider the following 248-residue polypeptide: uncharacterized protein (248 aa).

A helical membrane pass occupies residues 30 to 50 (LIALAIFIGLIAIFMFGCKAA). Disordered regions lie at residues 59–91 (NRDTTQSDTDVIYPRDDPRASRSHQNFGFMDPP) and 208–248 (TTES…VSTR). Composition is skewed to polar residues over residues 210–220 (ESPAPAQSTSN) and 239–248 (SLHNETVSTR).

The protein localises to the membrane. This is an uncharacterized protein from Caenorhabditis elegans.